The chain runs to 131 residues: Small ribosomal subunit protein uS8 (131 aa).

The protein belongs to the universal ribosomal protein uS8 family. Part of the 30S ribosomal subunit. Contacts proteins S5 and S12.

One of the primary rRNA binding proteins, it binds directly to 16S rRNA central domain where it helps coordinate assembly of the platform of the 30S subunit. This is Small ribosomal subunit protein uS8 from Pelagibacter ubique (strain HTCC1062).